The sequence spans 92 residues: Small ribosomal subunit protein uS19 (92 aa).

Belongs to the universal ribosomal protein uS19 family.

Protein S19 forms a complex with S13 that binds strongly to the 16S ribosomal RNA. The polypeptide is Small ribosomal subunit protein uS19 (Rhizobium johnstonii (strain DSM 114642 / LMG 32736 / 3841) (Rhizobium leguminosarum bv. viciae)).